We begin with the raw amino-acid sequence, 64 residues long: Beta-defensin 2 (64 aa).

Positions methionine 1–threonine 22 are cleaved as a signal peptide. 3 disulfides stabilise this stretch: cysteine 31–cysteine 60, cysteine 38–cysteine 53, and cysteine 43–cysteine 61.

The protein belongs to the beta-defensin family.

The protein localises to the secreted. In terms of biological role, has bactericidal activity. The chain is Beta-defensin 2 (DEFB2) from Ovis aries (Sheep).